Consider the following 447-residue polypeptide: Transcription factor azf1 (447 aa).

Disordered stretches follow at residues 125–155 (HNGA…NEVE) and 174–199 (QSPG…PQSY). The segment covering 127–139 (GASQQPPGAQSSS) has biased composition (low complexity). Polar residues predominate over residues 140–155 (NEEGAQGKSSSSNEVE). 4 C2H2-type zinc fingers span residues 225–249 (YACT…MRAH), 255–279 (FVCK…QRRH), 285–307 (FSCD…KITH), and 313–338 (FTCL…NKFH). The interval 377–447 (NKGIKGRGKD…EPYFIERQAH (71 aa)) is disordered. Residues 397–416 (PGSESRRRIEPLSSTDDKMR) show a composition bias toward basic and acidic residues. Residues 421-431 (GDTSMYNGGSS) are compositionally biased toward polar residues.

It is found in the nucleus. Functionally, transcription factor that acts as a positive regulator of ochratoxin A (OTA) biosynthesis via controlling the expression of antioxidant genes and oxidative phosphorylation genes. This Aspergillus niger (strain ATCC MYA-4892 / CBS 513.88 / FGSC A1513) protein is Transcription factor azf1.